An 86-amino-acid chain; its full sequence is Cell division topological specificity factor (86 aa).

It belongs to the MinE family.

In terms of biological role, prevents the cell division inhibition by proteins MinC and MinD at internal division sites while permitting inhibition at polar sites. This ensures cell division at the proper site by restricting the formation of a division septum at the midpoint of the long axis of the cell. This Parasynechococcus marenigrum (strain WH8102) protein is Cell division topological specificity factor.